The following is a 269-amino-acid chain: 2-heptyl-3-hydroxy-4(1H)-quinolone dioxygenase (269 aa).

His97 serves as a coordination point for substrate. The active-site Proton donor/acceptor is His246.

It belongs to the AB hydrolase superfamily. In terms of assembly, monomer.

The catalysed reaction is 2-heptyl-3-hydroxy-4(1H)-quinolone + O2 = N-octanoylanthranilate + CO + H(+). Its function is as follows. Ring-cleaving dioxygenase involved in the degradation pathway of the Pseudomonas aeruginosa quorum sensing signal molecules HHQ (2-heptyl-4-quinolone) and PQS (2-heptyl-3-hydroxy-4(1H)-quinolone) to anthranilate. Catalyzes the cleavage of PQS to form N-octanoylanthranilate and carbon monoxide. Thus, leads to the inactivation of PQS that plays a central role in the regulation of virulence factor production by P.aeruginosa, thereby quenching the production of antimicrobials, which may contribute to the competitiveness of M.abscessus in presence of P.aeruginosa. In vitro, can also use other 2-alkyl-3-hydroxy-4(1H)-quinolone (AHQ) substrates with shorter alkyl substituents at C2, but with lower efficiency. The sequence is that of 2-heptyl-3-hydroxy-4(1H)-quinolone dioxygenase from Mycobacteroides abscessus (strain ATCC 19977 / DSM 44196 / CCUG 20993 / CIP 104536 / JCM 13569 / NCTC 13031 / TMC 1543 / L948) (Mycobacterium abscessus).